Consider the following 135-residue polypeptide: Fluoride-specific ion channel FluC 2 (135 aa).

4 helical membrane passes run 5 to 25 (VLAA…GLLA), 36 to 56 (WGTV…METL), 68 to 88 (PFLG…ITDA), and 100 to 120 (ALLA…AAAG). Na(+) contacts are provided by G76 and T79.

It belongs to the fluoride channel Fluc/FEX (TC 1.A.43) family.

It is found in the cell membrane. The catalysed reaction is fluoride(in) = fluoride(out). Its activity is regulated as follows. Na(+) is not transported, but it plays an essential structural role and its presence is essential for fluoride channel function. Functionally, fluoride-specific ion channel. Important for reducing fluoride concentration in the cell, thus reducing its toxicity. The sequence is that of Fluoride-specific ion channel FluC 2 from Thermobifida fusca (strain YX).